A 238-amino-acid chain; its full sequence is tRNA (guanine-N(7)-)-methyltransferase (238 aa).

Positions 68, 93, 120, and 143 each coordinate S-adenosyl-L-methionine. Asp143 is an active-site residue. Residues Lys147, Asp179, and 216-219 each bind substrate; that span reads TKFE.

Belongs to the class I-like SAM-binding methyltransferase superfamily. TrmB family.

It catalyses the reaction guanosine(46) in tRNA + S-adenosyl-L-methionine = N(7)-methylguanosine(46) in tRNA + S-adenosyl-L-homocysteine. It participates in tRNA modification; N(7)-methylguanine-tRNA biosynthesis. Its function is as follows. Catalyzes the formation of N(7)-methylguanine at position 46 (m7G46) in tRNA. This is tRNA (guanine-N(7)-)-methyltransferase from Shewanella baltica (strain OS223).